A 207-amino-acid polypeptide reads, in one-letter code: Outer-membrane lipoprotein LolB (207 aa).

Positions Met1–Ala21 are cleaved as a signal peptide. The N-palmitoyl cysteine moiety is linked to residue Cys22. Cys22 carries the S-diacylglycerol cysteine lipid modification.

This sequence belongs to the LolB family. In terms of assembly, monomer.

It localises to the cell outer membrane. Its function is as follows. Plays a critical role in the incorporation of lipoproteins in the outer membrane after they are released by the LolA protein. This is Outer-membrane lipoprotein LolB from Shigella boydii serotype 18 (strain CDC 3083-94 / BS512).